Here is a 1761-residue protein sequence, read N- to C-terminus: Lysine-specific demethylase 3B (1761 aa).

An N-acetylalanine modification is found at A2. Residues 253 to 346 (DNSAPQSEGG…QRAKQPPSTF (94 aa)) form a disordered region. The span at 298 to 309 (ASKKLKGDRGEV) shows a compositional bias: basic and acidic residues. The residue at position 361 (K361) is an N6-acetyllysine. 2 disordered regions span residues 370–394 (QDEP…QTPL) and 438–496 (DTGL…NGVL). 3 stretches are compositionally biased toward polar residues: residues 380–392 (ASFT…TGQT), 453–468 (SRSQ…SILA), and 477–495 (PSSS…SNGV). Phosphoserine is present on residues S492, S546, S556, and S560. The interval 572–603 (RSVLGTDTKPGSKAGSSVDRKVPAESMPTLTP) is disordered. The residue at position 614 (T614) is a Phosphothreonine. The interval 714–762 (GPSLSAMGNGRSSSPTSSLTQPIEMPTLSSSPTEERPTVGPGQQDNPLL) is disordered. The segment covering 723 to 745 (GRSSSPTSSLTQPIEMPTLSSSP) has biased composition (polar residues). A phosphoserine mark is found at S766, S773, S778, and S779. K788 participates in a covalent cross-link: Glycyl lysine isopeptide (Lys-Gly) (interchain with G-Cter in SUMO2). S798 bears the Phosphoserine mark. The disordered stretch occupies residues 805 to 827 (ACRQDSDSSTNSDLSDLSDSEEQ). The C6-type zinc-finger motif lies at 1031–1056 (CDVCETTLFNIHWVCRKCGFGVCLDC). Polar residues predominate over residues 1142–1161 (GMSQLPSINPSASSGNETTF). Residues 1142–1220 (GMSQLPSINP…PCPDTAPPSS (79 aa)) form a disordered region. Residues 1174–1193 (EPDHVPKADSTDIRSEEPLK) show a composition bias toward basic and acidic residues. The span at 1194 to 1204 (TDSSASNSNSE) shows a compositional bias: polar residues. S1253 and S1259 each carry phosphoserine. Residues 1293–1297 (LRDLL) carry the LXXLL motif motif. The region spanning 1498–1721 (MPTRFEDLME…HCFRLTQEFR (224 aa)) is the JmjC domain. Positions 1560, 1562, and 1689 each coordinate Fe cation.

This sequence belongs to the JHDM2 histone demethylase family. The cofactor is Fe(2+). In terms of tissue distribution, ubiquitous. Highly expressed in placenta, skeletal muscle, kidney, heart and liver.

Its subcellular location is the nucleus. The catalysed reaction is N(6),N(6)-dimethyl-L-lysyl(9)-[histone H3] + 2 2-oxoglutarate + 2 O2 = L-lysyl(9)-[histone H3] + 2 formaldehyde + 2 succinate + 2 CO2. In terms of biological role, histone demethylase that specifically demethylates 'Lys-9' of histone H3, thereby playing a central role in histone code. Demethylation of Lys residue generates formaldehyde and succinate. May have tumor suppressor activity. The sequence is that of Lysine-specific demethylase 3B (KDM3B) from Homo sapiens (Human).